We begin with the raw amino-acid sequence, 89 residues long: MNTQFFEEYQTQLLDWQKKFFSTWMESLPKGTAEIKLTDTFETSLKLQEEMVKSYLEAQEKSATMMIDAQKQFWDNYFQALRQEPVSAN.

2 helix regions span residues 3-26 (TQFFEEYQTQLLDWQKKFFSTWME) and 39-83 (DTFE…ALRQ).

Homotetramer.

It is found in the cellular thylakoid membrane. Its subcellular location is the cytoplasm. It participates in biopolymer metabolism; poly-(R)-3-hydroxybutanoate biosynthesis. In terms of biological role, a phasin, it attaches to the polyhydroxybutyrate (PHB) granule surface regulating the number and size of PHB granules within a cell. It probably also acts as a regulator affecting the biosynthetic activity of PHB synthase in vivo. The protein is Phasin PhaP of Synechocystis sp. (strain ATCC 27184 / PCC 6803 / Kazusa).